The following is a 239-amino-acid chain: 1-(5-phosphoribosyl)-5-[(5-phosphoribosylamino)methylideneamino] imidazole-4-carboxamide isomerase (239 aa).

Residue aspartate 8 is the Proton acceptor of the active site. Aspartate 129 functions as the Proton donor in the catalytic mechanism.

The protein belongs to the HisA/HisF family.

It localises to the cytoplasm. It carries out the reaction 1-(5-phospho-beta-D-ribosyl)-5-[(5-phospho-beta-D-ribosylamino)methylideneamino]imidazole-4-carboxamide = 5-[(5-phospho-1-deoxy-D-ribulos-1-ylimino)methylamino]-1-(5-phospho-beta-D-ribosyl)imidazole-4-carboxamide. It functions in the pathway amino-acid biosynthesis; L-histidine biosynthesis; L-histidine from 5-phospho-alpha-D-ribose 1-diphosphate: step 4/9. The chain is 1-(5-phosphoribosyl)-5-[(5-phosphoribosylamino)methylideneamino] imidazole-4-carboxamide isomerase from Bacillus cereus (strain ZK / E33L).